The following is a 313-amino-acid chain: D-alanine--D-alanine ligase (313 aa).

Residues 108-308 form the ATP-grasp domain; the sequence is KLVWQQTGVP…YSELVVKVLS (201 aa). 138 to 193 is a binding site for ATP; sequence VAKLGLPLFVKPASEGSSVAVLKVKTADALPAALAEAATHDKIVIVEKSIEGGGEY. Asp-262, Glu-275, and Asn-277 together coordinate Mg(2+).

Belongs to the D-alanine--D-alanine ligase family. Requires Mg(2+) as cofactor. It depends on Mn(2+) as a cofactor.

Its subcellular location is the cytoplasm. It catalyses the reaction 2 D-alanine + ATP = D-alanyl-D-alanine + ADP + phosphate + H(+). It functions in the pathway cell wall biogenesis; peptidoglycan biosynthesis. Its function is as follows. Cell wall formation. The chain is D-alanine--D-alanine ligase from Burkholderia cenocepacia (strain HI2424).